We begin with the raw amino-acid sequence, 367 residues long: Germination protease (367 aa).

The propeptide occupies 1–15 (MKEPLDLSKYSIRTD).

Belongs to the peptidase A25 family. Homotetramer. In terms of processing, autoproteolytically processed. The inactive tetrameric zymogen termed p46 autoprocesses to a smaller form termed p41, which is active only during spore germination.

The catalysed reaction is Endopeptidase action with P4 Glu or Asp, P1 preferably Glu &gt; Asp, P1' hydrophobic and P2' Ala.. In terms of biological role, initiates the rapid degradation of small, acid-soluble proteins during spore germination. This Bacillus cereus (strain ATCC 14579 / DSM 31 / CCUG 7414 / JCM 2152 / NBRC 15305 / NCIMB 9373 / NCTC 2599 / NRRL B-3711) protein is Germination protease.